The sequence spans 419 residues: Gamma-glutamyl phosphate reductase (419 aa).

The protein belongs to the gamma-glutamyl phosphate reductase family.

The protein resides in the cytoplasm. It catalyses the reaction L-glutamate 5-semialdehyde + phosphate + NADP(+) = L-glutamyl 5-phosphate + NADPH + H(+). It participates in amino-acid biosynthesis; L-proline biosynthesis; L-glutamate 5-semialdehyde from L-glutamate: step 2/2. Its function is as follows. Catalyzes the NADPH-dependent reduction of L-glutamate 5-phosphate into L-glutamate 5-semialdehyde and phosphate. The product spontaneously undergoes cyclization to form 1-pyrroline-5-carboxylate. The protein is Gamma-glutamyl phosphate reductase of Yersinia enterocolitica serotype O:8 / biotype 1B (strain NCTC 13174 / 8081).